The primary structure comprises 98 residues: NADH-ubiquinone oxidoreductase chain 4L (98 aa).

Transmembrane regions (helical) follow at residues 1-21 (MEQI…GVLT), 28-48 (STLL…VLLI), and 61-81 (LILL…LVTI).

This sequence belongs to the complex I subunit 4L family. As to quaternary structure, core subunit of respiratory chain NADH dehydrogenase (Complex I) which is composed of 45 different subunits.

Its subcellular location is the mitochondrion inner membrane. The enzyme catalyses a ubiquinone + NADH + 5 H(+)(in) = a ubiquinol + NAD(+) + 4 H(+)(out). Functionally, core subunit of the mitochondrial membrane respiratory chain NADH dehydrogenase (Complex I) which catalyzes electron transfer from NADH through the respiratory chain, using ubiquinone as an electron acceptor. Part of the enzyme membrane arm which is embedded in the lipid bilayer and involved in proton translocation. This is NADH-ubiquinone oxidoreductase chain 4L (MT-ND4L) from Monodelphis domestica (Gray short-tailed opossum).